Reading from the N-terminus, the 339-residue chain is ATPase GET3 (339 aa).

Residue 34-41 (KGGVGKTT) participates in ATP binding. The active site involves aspartate 63. Glutamate 243 and asparagine 270 together coordinate ATP. Zn(2+) is bound by residues cysteine 281 and cysteine 284.

It belongs to the arsA ATPase family. Homodimer.

The protein resides in the cytoplasm. The protein localises to the endoplasmic reticulum. In terms of biological role, ATPase required for the post-translational delivery of tail-anchored (TA) proteins to the endoplasmic reticulum. Recognizes and selectively binds the transmembrane domain of TA proteins in the cytosol. This complex then targets to the endoplasmic reticulum by membrane-bound receptors, where the tail-anchored protein is released for insertion. This process is regulated by ATP binding and hydrolysis. ATP binding drives the homodimer towards the closed dimer state, facilitating recognition of newly synthesized TA membrane proteins. ATP hydrolysis is required for insertion. Subsequently, the homodimer reverts towards the open dimer state, lowering its affinity for the membrane-bound receptor, and returning it to the cytosol to initiate a new round of targeting. This Coccidioides immitis (strain RS) (Valley fever fungus) protein is ATPase GET3.